The sequence spans 210 residues: Small ribosomal subunit protein eS8y (210 aa).

The interval 1-22 is disordered; the sequence is MGISRDSIHKRRATGGKQKMWR. Basic residues predominate over residues 8–22; sequence IHKRRATGGKQKMWR.

This sequence belongs to the eukaryotic ribosomal protein eS8 family.

The sequence is that of Small ribosomal subunit protein eS8y (RPS8B) from Arabidopsis thaliana (Mouse-ear cress).